The following is a 1325-amino-acid chain: Lysine-specific demethylase 3A (1325 aa).

Disordered stretches follow at residues Ser249–Val284, Pro300–Val333, and Gln372–Lys399. Over residues Ser274 to His283 the composition is skewed to polar residues. The span at Ser378–Ser390 shows a compositional bias: low complexity. The C6-type zinc finger occupies Cys669–Cys694. 2 disordered regions span residues Thr772 to Gln791 and Pro798 to Val819. Positions Leu888–Leu892 match the LXXLL motif motif. The region spanning Met1062–Arg1285 is the JmjC domain. Fe cation is bound by residues His1124, Asp1126, and His1253.

This sequence belongs to the JHDM2 histone demethylase family. Requires Fe(2+) as cofactor.

It localises to the cytoplasm. It is found in the nucleus. The catalysed reaction is N(6),N(6)-dimethyl-L-lysyl(9)-[histone H3] + 2 2-oxoglutarate + 2 O2 = L-lysyl(9)-[histone H3] + 2 formaldehyde + 2 succinate + 2 CO2. In terms of biological role, histone demethylase that specifically demethylates 'Lys-9' of histone H3, thereby playing a central role in histone code. Preferentially demethylates mono- and dimethylated H3 'Lys-9' residue, with a preference for dimethylated residue, while it has weak or no activity on trimethylated H3 'Lys-9'. Demethylation of Lys residue generates formaldehyde and succinate. The chain is Lysine-specific demethylase 3A (KDM3A) from Gallus gallus (Chicken).